A 758-amino-acid chain; its full sequence is Vitamin K-dependent gamma-carboxylase (758 aa).

The disordered stretch occupies residues M1–G31. At A2 the chain carries N-acetylalanine. Topologically, residues A2 to D60 are cytoplasmic. Over residues P12 to A22 the composition is skewed to basic and acidic residues. A helical transmembrane segment spans residues P61 to Q81. The Lumenal segment spans residues E82–D113. The cysteines at positions 99 and 450 are disulfide-linked. Residues W114–R134 form a helical membrane-spanning segment. Over Y135 to R136 the chain is Cytoplasmic. Residues I137 to W157 traverse the membrane as a helical segment. The Lumenal portion of the chain corresponds to N158–Q292. A helical transmembrane segment spans residues L293–P313. The Cytoplasmic segment spans residues E314 to R361. The helical transmembrane segment at L362–F382 threads the bilayer. At L383–F758 the chain is on the lumenal side. A disordered region spans residues P727–F758. The segment covering P734–N750 has biased composition (low complexity).

It belongs to the vitamin K-dependent gamma-carboxylase family. As to quaternary structure, monomer. May interact with CALU.

Its subcellular location is the endoplasmic reticulum membrane. It catalyses the reaction 4-carboxy-L-glutamyl-[protein] + 2,3-epoxyphylloquinone + H2O + H(+) = phylloquinol + L-glutamyl-[protein] + CO2 + O2. Its function is as follows. Mediates the vitamin K-dependent carboxylation of glutamate residues to calcium-binding gamma-carboxyglutamate (Gla) residues with the concomitant conversion of the reduced hydroquinone form of vitamin K to vitamin K epoxide. Catalyzes gamma-carboxylation of various proteins, such as blood coagulation factors (F2, F7, F9 and F10), osteocalcin (BGLAP) or matrix Gla protein (MGP). The polypeptide is Vitamin K-dependent gamma-carboxylase (GGCX) (Delphinapterus leucas (Beluga whale)).